Here is a 336-residue protein sequence, read N- to C-terminus: 3-hydroxyisobutyrate dehydrogenase, mitochondrial (336 aa).

The N-terminal 36 residues, 1–36 (MAASLRLLGAASGLRYWSRRLRPAAGSFAAVCSRSV), are a transit peptide targeting the mitochondrion. Residue 40 to 68 (TPVGFIGLGNMGNPMAKNLMKHGYPLIIY) participates in NAD(+) binding. An N6-acetyllysine; alternate mark is found at Lys-60 and Lys-76. Lys-60 and Lys-76 each carry N6-succinyllysine; alternate. Residue Lys-95 is modified to N6-succinyllysine. NAD(+)-binding positions include 103–104 (LP) and Asn-108. Lys-121 is modified (N6-acetyllysine). Thr-134 lines the NAD(+) pocket. Position 141 is an N6-succinyllysine (Lys-141). At Lys-145 the chain carries N6-acetyllysine. The residue at position 149 (Lys-149) is an N6-acetyllysine; alternate. An N6-succinyllysine; alternate modification is found at Lys-149. The active site involves Lys-209. Residues Lys-238 and Lys-242 each carry the N6-acetyllysine; alternate modification. An N6-succinyllysine; alternate mark is found at Lys-238 and Lys-242. Lys-284 contributes to the NAD(+) binding site. N6-succinyllysine is present on Lys-297. Residue Lys-321 is modified to N6-acetyllysine; alternate. Lys-321 is modified (N6-succinyllysine; alternate).

It belongs to the HIBADH-related family. 3-hydroxyisobutyrate dehydrogenase subfamily. Homodimer. As to expression, detected in skin fibroblasts.

It is found in the mitochondrion. It carries out the reaction 3-hydroxy-2-methylpropanoate + NAD(+) = 2-methyl-3-oxopropanoate + NADH + H(+). It functions in the pathway amino-acid degradation; L-valine degradation. The polypeptide is 3-hydroxyisobutyrate dehydrogenase, mitochondrial (HIBADH) (Homo sapiens (Human)).